Consider the following 159-residue polypeptide: UPF0262 protein TM1040_3562 (159 aa).

A disordered region spans residues 1–21 (MSRISQIELDDRNLPPPTPEI).

This sequence belongs to the UPF0262 family.

The polypeptide is UPF0262 protein TM1040_3562 (Ruegeria sp. (strain TM1040) (Silicibacter sp.)).